Consider the following 1056-residue polypeptide: ATP-dependent helicase wrn-1 (1056 aa).

The segment at 1-102 (MISDDDDLPS…SSSDDSDQGD (102 aa)) is disordered. Repeat copies occupy residues 17 to 26 (NEELPETEPE) and 28 to 37 (NDELPETEPE). The 2 X 10 AA repeats of N-[ED]-E-L-P-E-T-E-P-E stretch occupies residues 17 to 37 (NEELPETEPEDNDELPETEPE). Over residues 19–38 (ELPETEPEDNDELPETEPES) the composition is skewed to acidic residues. A compositionally biased stretch (polar residues) spans 43-53 (PTVTSNKTENQ). The span at 54-63 (VADEDYDSFD) shows a compositional bias: acidic residues. A Helicase ATP-binding domain is found at 236-406 (VRNVLGGKDQ…IANLRLRKPL (171 aa)). 249 to 256 (MSTGYGKS) is a binding site for ATP. Residues 348 to 351 (DEAH) carry the DEAH box motif. The 157-residue stretch at 427–583 (MAEDLGLFMK…NLTMMLRQLE (157 aa)) folds into the Helicase C-terminal domain. Positions 591, 614, 615, and 618 each coordinate Zn(2+). A disordered region spans residues 749–771 (KEKAAPSTVPGASRSQSTKSSTE). The segment covering 761-771 (SRSQSTKSSTE) has biased composition (polar residues). The HRDC domain maps to 806–886 (PEKIDQLRSR…VQFSKETGIA (81 aa)). The disordered stretch occupies residues 1018-1056 (QEKPDIQSMPSTSNPSTIKTVPSTPSSSLRAPPLKKFKL). Residues 1025-1046 (SMPSTSNPSTIKTVPSTPSSSL) show a composition bias toward polar residues.

It belongs to the helicase family. RecQ subfamily. It depends on Zn(2+) as a cofactor.

It is found in the nucleus. It catalyses the reaction Couples ATP hydrolysis with the unwinding of duplex DNA by translocating in the 3'-5' direction.. The enzyme catalyses ATP + H2O = ADP + phosphate + H(+). In terms of biological role, essential for the formation of DNA replication focal centers; stably associates with foci elements generating binding sites for RP-A. Exhibits a magnesium-dependent ATP-dependent 3'-5' DNA-helicase activity. May be involved in the control of genomic stability. This is ATP-dependent helicase wrn-1 (wrn-1) from Caenorhabditis elegans.